Here is a 189-residue protein sequence, read N- to C-terminus: uncharacterized protein (189 aa).

Belongs to the OsmC/Ohr family.

This is an uncharacterized protein from Methanocaldococcus jannaschii (strain ATCC 43067 / DSM 2661 / JAL-1 / JCM 10045 / NBRC 100440) (Methanococcus jannaschii).